Consider the following 417-residue polypeptide: GTP-binding protein YPT11 (417 aa).

The interval 1-34 (MSQRKRYSLNVVTSPSIPSPTPSAPIRTNESNWE) is disordered. Residues 97 to 104 (GDANVGKT), 228 to 232 (DTAGQ), and 292 to 295 (NKID) contribute to the GTP site. S-geranylgeranyl cysteine attachment occurs at residues Cys-415 and Cys-416.

Belongs to the small GTPase superfamily. Rab family. As to quaternary structure, interacts with MYO2 (via C-terminal tail domain). Interacts with YIF1, YIP3, YIP4 and YIP5.

The protein localises to the endoplasmic reticulum membrane. Its subcellular location is the bud tip. It localises to the bud neck. Functionally, involved in the positive control of both endoplasmic reticulum (ER) and mitochondrion inheritance during cell divison. Required for the MYO2-dependent retention of newly inherited mitochondria at the bud tip in developing daughter cells. In Saccharomyces cerevisiae (strain YJM789) (Baker's yeast), this protein is GTP-binding protein YPT11 (YPT11).